Here is a 248-residue protein sequence, read N- to C-terminus: NADP-dependent 3-hydroxy acid dehydrogenase YdfG (248 aa).

NADP(+) contacts are provided by residues 7–12, 32–33, 54–55, and Asn81; these read GATAGF, RR, and DV. Ser134 contributes to the substrate binding site. NADP(+) contacts are provided by residues Tyr147, Lys151, and 177 to 185; that span reads PGLVGGTEF. Tyr147 serves as the catalytic Proton acceptor.

The protein belongs to the short-chain dehydrogenases/reductases (SDR) family. As to quaternary structure, homotetramer.

It catalyses the reaction 3-hydroxypropanoate + NADP(+) = 3-oxopropanoate + NADPH + H(+). The catalysed reaction is L-allo-threonine + NADP(+) = aminoacetone + CO2 + NADPH. NADP-dependent dehydrogenase with broad substrate specificity acting on 3-hydroxy acids. Catalyzes the NADP-dependent oxidation of L-allo-threonine to L-2-amino-3-keto-butyrate, which is spontaneously decarboxylated into aminoacetone. Also acts on D-threonine, L-serine, D-serine, D-3-hydroxyisobutyrate, L-3-hydroxyisobutyrate, D-glycerate and L-glycerate. Able to catalyze the reduction of the malonic semialdehyde to 3-hydroxypropionic acid. YdfG is apparently supplementing RutE, the presumed malonic semialdehyde reductase involved in pyrimidine degradation since both are able to detoxify malonic semialdehyde. The sequence is that of NADP-dependent 3-hydroxy acid dehydrogenase YdfG from Escherichia coli (strain K12).